The sequence spans 367 residues: Inositol-3-phosphate synthase (367 aa).

NAD(+)-binding residues include Asp-78, Ala-137, Tyr-157, Ser-200, Asp-235, and Lys-248.

The protein belongs to the myo-inositol 1-phosphate synthase family. It depends on NAD(+) as a cofactor.

It catalyses the reaction D-glucose 6-phosphate = 1D-myo-inositol 3-phosphate. In terms of biological role, key enzyme in myo-inositol biosynthesis pathway that catalyzes the conversion of glucose 6-phosphate to 1D-myo-inositol 3-phosphate in a NAD-dependent manner. The chain is Inositol-3-phosphate synthase (ino1) from Mycobacterium tuberculosis (strain CDC 1551 / Oshkosh).